We begin with the raw amino-acid sequence, 61 residues long: Small ribosomal subunit protein uS14 (61 aa).

Zn(2+)-binding residues include C24, C27, C40, and C43.

The protein belongs to the universal ribosomal protein uS14 family. Zinc-binding uS14 subfamily. In terms of assembly, part of the 30S ribosomal subunit. Contacts proteins S3 and S10. Requires Zn(2+) as cofactor.

Functionally, binds 16S rRNA, required for the assembly of 30S particles and may also be responsible for determining the conformation of the 16S rRNA at the A site. The sequence is that of Small ribosomal subunit protein uS14 from Desulfosudis oleivorans (strain DSM 6200 / JCM 39069 / Hxd3) (Desulfococcus oleovorans).